Here is a 514-residue protein sequence, read N- to C-terminus: Citrate synthase 2, peroxisomal (514 aa).

Active-site residues include His324, His363, and Asp419.

Belongs to the citrate synthase family. In terms of tissue distribution, widely expressed. Expressed throughout the shoot. Expressed in flower, silique, stem, cauline leaf, young leaf, mature leaf and senescent leaf.

The protein localises to the peroxisome. It catalyses the reaction oxaloacetate + acetyl-CoA + H2O = citrate + CoA + H(+). It participates in carbohydrate metabolism; tricarboxylic acid cycle; isocitrate from oxaloacetate: step 1/2. In terms of biological role, peroxisomal citrate synthase required for the fatty acid respiration in seedlings, citrate being exported from peroxisomes into mitochondria during respiration of triacylglycerol (TAG). Indeed, complete respiration requires the transfer of carbon in the form of citrate from the peroxisome to the mitochondria. This is Citrate synthase 2, peroxisomal (CSY2) from Arabidopsis thaliana (Mouse-ear cress).